The chain runs to 379 residues: Cytochrome b (379 aa).

The next 4 membrane-spanning stretches (helical) occupy residues 33–53 (FGSL…FLAM), 77–98 (WLIR…FIHV), 113–133 (WNIG…GYVL), and 178–198 (FFAF…VHLL). Positions 83 and 97 each coordinate heme b. His-182 and His-196 together coordinate heme b. His-201 contacts a ubiquinone. The next 4 membrane-spanning stretches (helical) occupy residues 226-246 (TKDL…ALFF), 288-308 (LGGV…PLLN), 320-340 (VTQV…WIGG), and 347-367 (FTMI…ILIP).

Belongs to the cytochrome b family. As to quaternary structure, the cytochrome bc1 complex contains 11 subunits: 3 respiratory subunits (MT-CYB, CYC1 and UQCRFS1), 2 core proteins (UQCRC1 and UQCRC2) and 6 low-molecular weight proteins (UQCRH/QCR6, UQCRB/QCR7, UQCRQ/QCR8, UQCR10/QCR9, UQCR11/QCR10 and a cleavage product of UQCRFS1). This cytochrome bc1 complex then forms a dimer. Heme b is required as a cofactor.

Its subcellular location is the mitochondrion inner membrane. In terms of biological role, component of the ubiquinol-cytochrome c reductase complex (complex III or cytochrome b-c1 complex) that is part of the mitochondrial respiratory chain. The b-c1 complex mediates electron transfer from ubiquinol to cytochrome c. Contributes to the generation of a proton gradient across the mitochondrial membrane that is then used for ATP synthesis. The polypeptide is Cytochrome b (MT-CYB) (Akodon lutescens puer (Altiplano grass mouse)).